The sequence spans 287 residues: PPP2R1A-PPP2R2A-interacting phosphatase regulator 1 (287 aa).

Residues 1–44 are disordered; sequence MAQEKMELDLELPPGTGGSPAEGGGSGGGGGLRRSNSAPLIHGL. Positions 15–32 are enriched in gly residues; the sequence is GTGGSPAEGGGSGGGGGL. Position 35 is a phosphoserine (Ser-35). Position 37 is a phosphoserine; by CHEK1 (Ser-37). Ser-45 is modified (phosphoserine). At Thr-47 the chain carries Phosphothreonine. 3 positions are modified to phosphoserine: Ser-48, Ser-62, and Ser-76. Lys-89 is covalently cross-linked (Glycyl lysine isopeptide (Lys-Gly) (interchain with G-Cter in SUMO1)). Phosphoserine occurs at positions 143 and 147. At Thr-149 the chain carries Phosphothreonine. Disordered regions lie at residues 167–189 and 236–287; these read SNGL…RSQS and GVCV…LSSK. Composition is skewed to low complexity over residues 178 to 189 and 246 to 257; these read PTTRFTTRRSQS and GNSSSAGSSCNS. A phosphoserine mark is found at Ser-187 and Ser-189. Over residues 259-270 the composition is skewed to polar residues; it reads AKVSTTTDSPVS. Phosphoserine is present on residues Ser-267, Ser-270, and Ser-276.

It belongs to the FAM122 family. As to quaternary structure, interacts with PPP2CA and PPP2R1A. Interacts (via its N-terminus) with PPP2R2A; the interaction is direct and this interaction inhibits PP2A activity. The CHEK1-mediated Ser-37 phosphorylated form interacts with 14-3-3 proteins. Post-translationally, CHEK1-mediated phosphorylation at Ser-37 negatively regulates its ability to inhibit serine/threonine-protein phosphatase 2A (PP2A) activity. Phosphorylation leads to its release from the PP2A complex and its sequestration by 14-3-3 proteins in the cytoplasm resulting in its inability to translocate to the nucleus, where it otherwise inhibits PP2A.

The protein resides in the nucleus. Its subcellular location is the cytoplasm. Functionally, acts as an inhibitor of serine/threonine-protein phosphatase 2A (PP2A) activity. Inhibits PP2A activity by blocking the substrate binding site on PPP2R2A and the active site of PPP2CA. Potentiates ubiquitin-mediated proteasomal degradation of serine/threonine-protein phosphatase 2A catalytic subunit alpha (PPP2CA). Inhibits PP2A-mediated dephosphorylation of WEE1, promoting ubiquitin-mediated proteolysis of WEE1, thereby releasing G2/M checkpoint. The chain is PPP2R1A-PPP2R2A-interacting phosphatase regulator 1 from Homo sapiens (Human).